A 296-amino-acid chain; its full sequence is Lipoyl synthase (296 aa).

The [4Fe-4S] cluster site is built by Cys-34, Cys-39, Cys-45, Cys-60, Cys-64, Cys-67, and Ser-276. The 220-residue stretch at 46–265 (WGEGTATFMI…GEVALSMGFK (220 aa)) folds into the Radical SAM core domain.

Belongs to the radical SAM superfamily. Lipoyl synthase family. Requires [4Fe-4S] cluster as cofactor.

It localises to the cytoplasm. It catalyses the reaction [[Fe-S] cluster scaffold protein carrying a second [4Fe-4S](2+) cluster] + N(6)-octanoyl-L-lysyl-[protein] + 2 oxidized [2Fe-2S]-[ferredoxin] + 2 S-adenosyl-L-methionine + 4 H(+) = [[Fe-S] cluster scaffold protein] + N(6)-[(R)-dihydrolipoyl]-L-lysyl-[protein] + 4 Fe(3+) + 2 hydrogen sulfide + 2 5'-deoxyadenosine + 2 L-methionine + 2 reduced [2Fe-2S]-[ferredoxin]. It participates in protein modification; protein lipoylation via endogenous pathway; protein N(6)-(lipoyl)lysine from octanoyl-[acyl-carrier-protein]: step 2/2. Its function is as follows. Catalyzes the radical-mediated insertion of two sulfur atoms into the C-6 and C-8 positions of the octanoyl moiety bound to the lipoyl domains of lipoate-dependent enzymes, thereby converting the octanoylated domains into lipoylated derivatives. In Pyrobaculum arsenaticum (strain DSM 13514 / JCM 11321 / PZ6), this protein is Lipoyl synthase.